Reading from the N-terminus, the 257-residue chain is Myosin-8 (257 aa).

The stretch at 1–257 (RAALQAEIEE…REVHTKISAE (257 aa)) forms a coiled coil. Residues Ser33, Ser45, and Ser58 each carry the phosphoserine modification.

Muscle myosin is a hexameric protein that consists of 2 heavy chain subunits (MHC), 2 alkali light chain subunits (MLC) and 2 regulatory light chain subunits (MLC-2).

It localises to the cytoplasm. The protein resides in the myofibril. In terms of biological role, muscle contraction. The protein is Myosin-8 (Myh8) of Rattus norvegicus (Rat).